The chain runs to 32 residues: Fibrinolytic enzyme 2 (32 aa).

One can recognise a Peptidase S8 domain in the interval I1–R32. The active-site Charge relay system is the S5.

It belongs to the peptidase S8 family.

With respect to regulation, inhibited by PMSF. Not inhibited by benzamidine, aprotinin, SBTI, EDTA, EGTA, 2-mercaptoethanol, iodoacetic acid or pepstatin A. In terms of biological role, serine protease. Has fibrinolytic and fibrinogenolytic but no plasminogenolytic activity. Cleaves after Arg and Lys residues. Cleaves fibrinogen alpha chain, beta chain and gamma chain in that order. The chain is Fibrinolytic enzyme 2 from Hediste japonica (Polychaete worm).